A 319-amino-acid polypeptide reads, in one-letter code: Ribonuclease Z (319 aa).

Histidine 62, histidine 64, aspartate 66, histidine 67, histidine 145, aspartate 215, and histidine 273 together coordinate Zn(2+). The active-site Proton acceptor is the aspartate 66.

This sequence belongs to the RNase Z family. As to quaternary structure, homodimer. Requires Zn(2+) as cofactor.

The catalysed reaction is Endonucleolytic cleavage of RNA, removing extra 3' nucleotides from tRNA precursor, generating 3' termini of tRNAs. A 3'-hydroxy group is left at the tRNA terminus and a 5'-phosphoryl group is left at the trailer molecule.. Functionally, zinc phosphodiesterase, which displays some tRNA 3'-processing endonuclease activity. Probably involved in tRNA maturation, by removing a 3'-trailer from precursor tRNA. The polypeptide is Ribonuclease Z (Borrelia duttonii (strain Ly)).